We begin with the raw amino-acid sequence, 449 residues long: Anthocyanidin 3-O-glucosyltransferase 1 (449 aa).

The Proton acceptor role is filled by histidine 3. An anthocyanidin is bound at residue histidine 3. The Charge relay role is filled by aspartate 103. Threonine 125, alanine 325, glutamine 327, histidine 342, tryptophan 345, asparagine 346, serine 347, and glutamate 350 together coordinate UDP-alpha-D-glucose. Alanine 365 serves as a coordination point for an anthocyanidin. The UDP-alpha-D-glucose site is built by glutamate 366 and glutamine 367.

It belongs to the UDP-glycosyltransferase family. Expressed in cotyledons and roots, but not in leaves.

The enzyme catalyses an anthocyanidin + UDP-alpha-D-glucose + H(+) = an anthocyanidin 3-O-beta-D-glucoside + UDP. It functions in the pathway pigment biosynthesis; anthocyanin biosynthesis. In the presence of other necessary color factors, this glycosylation reaction allows the accumulation of anthocyanin pigments. This is Anthocyanidin 3-O-glucosyltransferase 1 (GT1) from Manihot esculenta (Cassava).